Here is a 208-residue protein sequence, read N- to C-terminus: MSSQYSNVENLSPQTIRQVMRELQEMENTPPEGIKVLINESDVTDIQALIDGPAGTPYAIGVFRVKLTLSKDFPQTPPKAYFLTKIFHPNVAANGEICVNTLKKDWKPDLGIKHILLTIKCLLIVPNPESALNEEAGKMLLERYDDYSQRARMMTEIHAQPAKCASTTSDAKDDDGPSTKKHAGLDKKLQDKKKEKLLKEKKRMLKRL.

A UBC core domain is found at 14 to 160; the sequence is QTIRQVMREL…ARMMTEIHAQ (147 aa). The active-site Glycyl thioester intermediate is the Cys-98. A disordered region spans residues 159–208; that stretch reads AQPAKCASTTSDAKDDDGPSTKKHAGLDKKLQDKKKEKLLKEKKRMLKRL. Positions 170–198 are enriched in basic and acidic residues; sequence DAKDDDGPSTKKHAGLDKKLQDKKKEKLL. Residues 199–208 are compositionally biased toward basic residues; sequence KEKKRMLKRL.

Belongs to the ubiquitin-conjugating enzyme family.

It catalyses the reaction S-ubiquitinyl-[E1 ubiquitin-activating enzyme]-L-cysteine + [E2 ubiquitin-conjugating enzyme]-L-cysteine = [E1 ubiquitin-activating enzyme]-L-cysteine + S-ubiquitinyl-[E2 ubiquitin-conjugating enzyme]-L-cysteine.. Its pathway is protein modification; protein ubiquitination. Functionally, catalyzes the covalent attachment of ubiquitin to other proteins. Acts as an essential factor of the anaphase promoting complex/cyclosome (APC/C), a cell cycle-regulated ubiquitin ligase that controls progression through mitosis. Acts by specifically elongating polyubiquitin chains initiated by the E2 enzyme vih/UbcH10 on APC/C substrates, enhancing the degradation of APC/C substrates by the proteasome and promoting mitotic exit. This Drosophila willistoni (Fruit fly) protein is Ubiquitin-conjugating enzyme E2 S.